Reading from the N-terminus, the 459-residue chain is Cysteine--tRNA ligase (459 aa).

Cys28 serves as a coordination point for Zn(2+). The short motif at Val30–His40 is the 'HIGH' region element. Cys209, His234, and Glu238 together coordinate Zn(2+). The short motif at Lys266–Ser270 is the 'KMSKS' region element. Lys269 provides a ligand contact to ATP.

This sequence belongs to the class-I aminoacyl-tRNA synthetase family. Monomer. It depends on Zn(2+) as a cofactor.

It is found in the cytoplasm. It carries out the reaction tRNA(Cys) + L-cysteine + ATP = L-cysteinyl-tRNA(Cys) + AMP + diphosphate. In Shewanella loihica (strain ATCC BAA-1088 / PV-4), this protein is Cysteine--tRNA ligase.